The chain runs to 224 residues: Synaptonemal complex protein 3 (224 aa).

Coiled-coil stretches lie at residues 63–97 (RVKCAAQRESLERQLQDLTATDNKLSEQKRDWEER) and 137–171 (HDSMNGQFNSLKNNLDELNIEKKQLEVAIADQSST).

As to quaternary structure, interacts with gras-1. Interacts with brc-1 and brd-1.

It is found in the chromosome. Functionally, plays a role in early meiotic events; during prophase I contributes to synaptonemal complex (SC) assembly, synapsis and chiasmata formation and stabilization of homologous chromosomes pairing. Required for restricting SC assembly to bridge paired chromosome axes. Required for the timely progression of meiotic crossover recombination. Required for the synapsis checkpoint. The protein is Synaptonemal complex protein 3 of Caenorhabditis elegans.